The primary structure comprises 807 residues: Dual specificity protein phosphatase PPS1 (807 aa).

In terms of domain architecture, Tyrosine-protein phosphatase spans 585–783; it reads LPSRILRHLY…LFKWWKKHYN (199 aa). The interval 593–807 is catalytic; that stretch reads LYLGSLDHAQ…GIAEVNMKYT (215 aa). The active-site Phosphocysteine intermediate is the Cys725.

This sequence belongs to the protein-tyrosine phosphatase family. Non-receptor class dual specificity subfamily.

It carries out the reaction O-phospho-L-tyrosyl-[protein] + H2O = L-tyrosyl-[protein] + phosphate. It catalyses the reaction O-phospho-L-seryl-[protein] + H2O = L-seryl-[protein] + phosphate. The catalysed reaction is O-phospho-L-threonyl-[protein] + H2O = L-threonyl-[protein] + phosphate. Functionally, protein phosphatase with specificity for serine, threonine, and tyrosine residues; has a role in the DNA synthesis phase of the cell cycle. This is Dual specificity protein phosphatase PPS1 (PPS1) from Saccharomyces cerevisiae (strain ATCC 204508 / S288c) (Baker's yeast).